The chain runs to 212 residues: Cytidylate kinase (212 aa).

11–19 (GPAASGKGT) is a binding site for ATP. Positions 50 to 69 (GGDPADPAASEEQARSLSRL) are disordered.

Belongs to the cytidylate kinase family. Type 1 subfamily.

The protein localises to the cytoplasm. The catalysed reaction is CMP + ATP = CDP + ADP. It carries out the reaction dCMP + ATP = dCDP + ADP. This Acidiphilium cryptum (strain JF-5) protein is Cytidylate kinase.